Consider the following 628-residue polypeptide: Biosynthetic arginine decarboxylase (628 aa).

Residue Lys99 is modified to N6-(pyridoxal phosphate)lysine. Residue Val279–Tyr289 participates in substrate binding.

This sequence belongs to the Orn/Lys/Arg decarboxylase class-II family. SpeA subfamily. Mg(2+) serves as cofactor. The cofactor is pyridoxal 5'-phosphate.

It catalyses the reaction L-arginine + H(+) = agmatine + CO2. It participates in amine and polyamine biosynthesis; agmatine biosynthesis; agmatine from L-arginine: step 1/1. Catalyzes the biosynthesis of agmatine from arginine. This chain is Biosynthetic arginine decarboxylase, found in Xylella fastidiosa (strain M23).